Here is a 232-residue protein sequence, read N- to C-terminus: Fibrillarin-like rRNA/tRNA 2'-O-methyltransferase (232 aa).

Residues 89-90 (TT), 108-109 (EF), 133-134 (DA), and 153-156 (DIAQ) contribute to the S-adenosyl-L-methionine site.

This sequence belongs to the methyltransferase superfamily. Fibrillarin family. In terms of assembly, interacts with nop5. Component of box C/D small ribonucleoprotein (sRNP) particles that contain rpl7ae, FlpA and nop5, plus a guide RNA.

Involved in pre-rRNA and tRNA processing. Utilizes the methyl donor S-adenosyl-L-methionine to catalyze the site-specific 2'-hydroxyl methylation of ribose moieties in rRNA and tRNA. Site specificity is provided by a guide RNA that base pairs with the substrate. Methylation occurs at a characteristic distance from the sequence involved in base pairing with the guide RNA. This is Fibrillarin-like rRNA/tRNA 2'-O-methyltransferase from Saccharolobus islandicus (strain M.16.27) (Sulfolobus islandicus).